The chain runs to 741 residues: NUT family member 2G (741 aa).

5 disordered regions span residues P172–S200, I293–I375, L391–G424, R496–M624, and R638–Q741. The span at S304–P321 shows a compositional bias: pro residues. Residues E402–Q412 are compositionally biased toward basic and acidic residues. Polar residues predominate over residues Q528–Q545. Positions L639 to L650 are enriched in low complexity. Over residues S731 to Q741 the composition is skewed to basic residues.

It belongs to the NUT family.

This is NUT family member 2G (NUTM2G) from Homo sapiens (Human).